A 174-amino-acid polypeptide reads, in one-letter code: NADH-ubiquinone oxidoreductase chain 6 (174 aa).

4 consecutive transmembrane segments (helical) span residues 25 to 45, 48 to 68, 82 to 102, and 143 to 163; these read SMGLMLLIQTFLTCLITGIYV, FWFSYVLFLIFLGGMLILFIY, FKLTMFSLVLFSLSMVIFFIL, and LITLLLINYLFLTLLVTVKIT.

Belongs to the complex I subunit 6 family.

Its subcellular location is the mitochondrion membrane. It catalyses the reaction a ubiquinone + NADH + 5 H(+)(in) = a ubiquinol + NAD(+) + 4 H(+)(out). In terms of biological role, core subunit of the mitochondrial membrane respiratory chain NADH dehydrogenase (Complex I) that is believed to belong to the minimal assembly required for catalysis. Complex I functions in the transfer of electrons from NADH to the respiratory chain. The immediate electron acceptor for the enzyme is believed to be ubiquinone. The polypeptide is NADH-ubiquinone oxidoreductase chain 6 (mt:ND6) (Anopheles gambiae (African malaria mosquito)).